Reading from the N-terminus, the 470-residue chain is MNVVSVVDILSGHVSKNTEITIQGWIRTRRDSKAKISFLDLYDGSCINSLQIIAYDKLHNYKNEILRLTSGCSVIIVGIIVKSIGIKQHVEVIAKNIKILGWIEDPSTYPITAKKHTMEYLREVSHLRPRTNTIGAVARIRDTLSQAIHNFLHKQGFIWIPTPIITACDTEGSSKMFCVSTSETQKILNNPNEKLHHTHDTTYDFFSKKAFLTVSGQLNAEAYACALSKVYTFGPTFRAEYSNTNRHLAEFWMIEPEAAFMTLDDIIILAESLLKNIIRILLEKRSDDIKYLVDKINKNIITILENFSEIKFNHIEYTEAIKLLEICNRKFNNPIHWGTDLFSEHEKYLSEEYFKSPVIIKNFPKNIKAFYMRLNDDNKTVASMDILVPGIGEIIGGSQREERLSKLDQRLQENCLTQENYWWYRDLRRYGTVPHSGFGLGFERLMIYVTGIKNIRDVIPFPRTSKNINF.

It belongs to the class-II aminoacyl-tRNA synthetase family. Homodimer.

The protein resides in the cytoplasm. It catalyses the reaction tRNA(Asn) + L-asparagine + ATP = L-asparaginyl-tRNA(Asn) + AMP + diphosphate + H(+). This is Asparagine--tRNA ligase from Blochmanniella pennsylvanica (strain BPEN).